The primary structure comprises 96 residues: Putative pterin-4-alpha-carbinolamine dehydratase (96 aa).

This sequence belongs to the pterin-4-alpha-carbinolamine dehydratase family.

The enzyme catalyses (4aS,6R)-4a-hydroxy-L-erythro-5,6,7,8-tetrahydrobiopterin = (6R)-L-erythro-6,7-dihydrobiopterin + H2O. This Novosphingobium aromaticivorans (strain ATCC 700278 / DSM 12444 / CCUG 56034 / CIP 105152 / NBRC 16084 / F199) protein is Putative pterin-4-alpha-carbinolamine dehydratase.